A 69-amino-acid chain; its full sequence is Antimicrobial peptide ISAMP (69 aa).

The N-terminal stretch at 1-23 is a signal peptide; sequence MRAVAIFIVTLLVLECVYFVMSE.

Expressed in the fat body, hemocytes and salivary glands of partially-fed female ticks. Not expressed in the midgut.

Its subcellular location is the secreted. Its function is as follows. Has antimicrobial activity against B.cereus (MIC=5.8 ug/ml), B.subtilis (MIC=12.3 ug/ml), S.aureus (MIC=10.4 ug/ml), E.coli Edl 933 (MIC=3.2 ug/ml) and E.coli MG/655 (MIC=4.2 ug/ml). Non-hemolytic. This Ixodes scapularis (Black-legged tick) protein is Antimicrobial peptide ISAMP.